Consider the following 115-residue polypeptide: Gonadotropin subunit beta-2 (115 aa).

6 disulfide bridges follow: cysteine 6/cysteine 54, cysteine 20/cysteine 69, cysteine 23/cysteine 107, cysteine 31/cysteine 85, cysteine 35/cysteine 87, and cysteine 90/cysteine 97. An N-linked (GlcNAc...) asparagine glycan is attached at asparagine 10.

This sequence belongs to the glycoprotein hormones subunit beta family. Heterodimer of an alpha and a beta chain.

It is found in the secreted. Functionally, involved in gametogenesis and steroidogenesis. The sequence is that of Gonadotropin subunit beta-2 (cgbb) from Thunnus obesus (Bigeye tuna).